The sequence spans 123 residues: Ribonuclease P protein component (123 aa).

The protein belongs to the RnpA family. In terms of assembly, consists of a catalytic RNA component (M1 or rnpB) and a protein subunit.

It catalyses the reaction Endonucleolytic cleavage of RNA, removing 5'-extranucleotides from tRNA precursor.. RNaseP catalyzes the removal of the 5'-leader sequence from pre-tRNA to produce the mature 5'-terminus. It can also cleave other RNA substrates such as 4.5S RNA. The protein component plays an auxiliary but essential role in vivo by binding to the 5'-leader sequence and broadening the substrate specificity of the ribozyme. This chain is Ribonuclease P protein component, found in Streptococcus pneumoniae serotype 4 (strain ATCC BAA-334 / TIGR4).